A 318-amino-acid polypeptide reads, in one-letter code: Chlorophyllase-2 (318 aa).

The GXSXG motif lies at 136 to 140 (GHSRG). The active-site Nucleophile is Ser-138. Catalysis depends on charge relay system residues Asp-167 and His-244.

It belongs to the AB hydrolase superfamily. Lipase family. Expressed in leaves, flowers and flower buds, but not in roots.

It localises to the cytoplasm. The protein localises to the cytosol. It catalyses the reaction a chlorophyll + H2O = a chlorophyllide + phytol + H(+). The enzyme catalyses chlorophyll a + H2O = phytol + chlorophyllide a + H(+). It participates in porphyrin-containing compound metabolism; chlorophyll degradation. In terms of biological role, catalyzes the hydrolysis of ester bond in chlorophyll to yield chlorophyllide and phytol. Does not seem to be required for chlorophyll degradation during senescence. The sequence is that of Chlorophyllase-2 from Arabidopsis thaliana (Mouse-ear cress).